We begin with the raw amino-acid sequence, 309 residues long: Elongation factor Ts (309 aa).

An involved in Mg(2+) ion dislocation from EF-Tu region spans residues 82–85 (TDFV).

This sequence belongs to the EF-Ts family.

The protein resides in the cytoplasm. Functionally, associates with the EF-Tu.GDP complex and induces the exchange of GDP to GTP. It remains bound to the aminoacyl-tRNA.EF-Tu.GTP complex up to the GTP hydrolysis stage on the ribosome. This Rickettsia felis (strain ATCC VR-1525 / URRWXCal2) (Rickettsia azadi) protein is Elongation factor Ts.